Reading from the N-terminus, the 328-residue chain is MTTHLLVTGAAGFIGSQYVRTLLGPGGPPDVVVTALDALTYAGNPDNLAAVRGHPRYRFERGDICDAPGRRVMAGQDQVVHLAAESHVDRSLLDASVFVRTNVHGTQTLLDAATRHGVASFVQVSTDEVYGSLEHGSWTEDEPLRPNSPYSASKASGDLLALAHHVSHGLDVRVTRCSNNYGPRQFPEKLIPRFITLLMDGHRVPLYGDGLNVREWLHVDDHVRGIEAVRTRGRAGRVYNIGGGATLSNKELVGLLLEAAGADWGSVEYVEDRKGHDRRYAVDSTRIQRELGFAPAVDLADGLAATVAWYHKHRSWWEPLVPAGSLPA.

Residues 13–14 (FI), 37–40 (DALT), 63–64 (DI), 82–86 (LAAES), and Thr-101 contribute to the NAD(+) site. Ser-86 is a substrate binding site. Thr-126 lines the substrate pocket. Asp-127 serves as the catalytic Proton donor. Residues Glu-128 and Tyr-150 each act as proton acceptor in the active site. NAD(+) is bound at residue 150-154 (YSASK). Asn-179 provides a ligand contact to substrate. Asn-180 contacts NAD(+). Residues 189–190 (KL), 205–207 (PLY), Arg-214, Asn-249, and 272–276 (DRKGH) each bind substrate.

The protein belongs to the NAD(P)-dependent epimerase/dehydratase family. dTDP-glucose dehydratase subfamily. In terms of assembly, homodimer. It depends on NAD(+) as a cofactor.

The catalysed reaction is dTDP-alpha-D-glucose = dTDP-4-dehydro-6-deoxy-alpha-D-glucose + H2O. It participates in antibiotic biosynthesis; streptomycin biosynthesis. Functionally, involved in the biosynthesis of the streptose moiety of streptomycin. Catalyzes the dehydration of dTDP-D-glucose to form dTDP-6-deoxy-D-xylo-4-hexulose via a three-step process involving oxidation, dehydration and reduction. The chain is dTDP-glucose 4,6-dehydratase from Streptomyces griseus.